The following is a 460-amino-acid chain: Bifunctional protein GlmU (460 aa).

The segment at 1–235 is pyrophosphorylase; the sequence is MALSAAIVLA…PLTVEGVNDR (235 aa). Residues 9–12, Lys23, Gln76, and 81–82 contribute to the UDP-N-acetyl-alpha-D-glucosamine site; these read LAAG and GT. Mg(2+) is bound at residue Asp109. 4 residues coordinate UDP-N-acetyl-alpha-D-glucosamine: Gly146, Glu161, Asn176, and Asn233. Asn233 is a Mg(2+) binding site. The linker stretch occupies residues 236-256; sequence VQLAALSKTYNRRVCERWMRD. The N-acetyltransferase stretch occupies residues 257–460; sequence GVTILDPETT…VEGWKPAWER (204 aa). Positions 338 and 356 each coordinate UDP-N-acetyl-alpha-D-glucosamine. His368 (proton acceptor) is an active-site residue. The UDP-N-acetyl-alpha-D-glucosamine site is built by Tyr371 and Asn382. Acetyl-CoA is bound by residues 391–392 and Ala428; that span reads NY.

The protein in the N-terminal section; belongs to the N-acetylglucosamine-1-phosphate uridyltransferase family. In the C-terminal section; belongs to the transferase hexapeptide repeat family. Homotrimer. Requires Mg(2+) as cofactor.

It is found in the cytoplasm. The enzyme catalyses alpha-D-glucosamine 1-phosphate + acetyl-CoA = N-acetyl-alpha-D-glucosamine 1-phosphate + CoA + H(+). It catalyses the reaction N-acetyl-alpha-D-glucosamine 1-phosphate + UTP + H(+) = UDP-N-acetyl-alpha-D-glucosamine + diphosphate. It participates in nucleotide-sugar biosynthesis; UDP-N-acetyl-alpha-D-glucosamine biosynthesis; N-acetyl-alpha-D-glucosamine 1-phosphate from alpha-D-glucosamine 6-phosphate (route II): step 2/2. The protein operates within nucleotide-sugar biosynthesis; UDP-N-acetyl-alpha-D-glucosamine biosynthesis; UDP-N-acetyl-alpha-D-glucosamine from N-acetyl-alpha-D-glucosamine 1-phosphate: step 1/1. It functions in the pathway bacterial outer membrane biogenesis; LPS lipid A biosynthesis. Its function is as follows. Catalyzes the last two sequential reactions in the de novo biosynthetic pathway for UDP-N-acetylglucosamine (UDP-GlcNAc). The C-terminal domain catalyzes the transfer of acetyl group from acetyl coenzyme A to glucosamine-1-phosphate (GlcN-1-P) to produce N-acetylglucosamine-1-phosphate (GlcNAc-1-P), which is converted into UDP-GlcNAc by the transfer of uridine 5-monophosphate (from uridine 5-triphosphate), a reaction catalyzed by the N-terminal domain. This Bifidobacterium longum (strain NCC 2705) protein is Bifunctional protein GlmU.